A 62-amino-acid chain; its full sequence is uncharacterized protein (62 aa).

Residues 1 to 22 (MVNVALLLDQIIATPLRSMVEA) form the signal peptide.

This is an uncharacterized protein from Archaeoglobus fulgidus (strain ATCC 49558 / DSM 4304 / JCM 9628 / NBRC 100126 / VC-16).